Reading from the N-terminus, the 155-residue chain is Regulatory protein RecX (155 aa).

It belongs to the RecX family.

It localises to the cytoplasm. Functionally, modulates RecA activity. The sequence is that of Regulatory protein RecX from Pseudomonas fluorescens (strain ATCC BAA-477 / NRRL B-23932 / Pf-5).